The sequence spans 50 residues: U37-theraphotoxin-Cg1b (50 aa).

The signal sequence occupies residues 1–19 (MRVLLIIAGLALLSVVCYT).

Belongs to the neurotoxin 10 (Hwtx-1) family. 67 (Jztx-67) subfamily. Expressed by the venom gland.

The protein localises to the secreted. The protein is U37-theraphotoxin-Cg1b of Chilobrachys guangxiensis (Chinese earth tiger tarantula).